Reading from the N-terminus, the 188-residue chain is MAFSATQIRRGMVLVFEGDPCRVIEFRHHTPGNLRAMVQAKLKNLRTGSNFEHRFRAADTIVKADMETHELEFMYQGGDTYHFMNSENYDQLELDDEALGDSAPWMQPGLKILAEYYNGRPIGIQLPNSLVFEIVETAPVVRGATKTASSKPAKLENGVTVNVPEFVEQGTRVRVNPSTGEYLDRAKD.

It belongs to the elongation factor P family.

The protein resides in the cytoplasm. The protein operates within protein biosynthesis; polypeptide chain elongation. Functionally, involved in peptide bond synthesis. Stimulates efficient translation and peptide-bond synthesis on native or reconstituted 70S ribosomes in vitro. Probably functions indirectly by altering the affinity of the ribosome for aminoacyl-tRNA, thus increasing their reactivity as acceptors for peptidyl transferase. This chain is Elongation factor P, found in Gemmatimonas aurantiaca (strain DSM 14586 / JCM 11422 / NBRC 100505 / T-27).